A 343-amino-acid polypeptide reads, in one-letter code: Cytoplasmic tRNA 2-thiolation protein 1 (343 aa).

This sequence belongs to the TtcA family. CTU1/NCS6/ATPBD3 subfamily.

It is found in the cytoplasm. It functions in the pathway tRNA modification; 5-methoxycarbonylmethyl-2-thiouridine-tRNA biosynthesis. In terms of biological role, plays a central role in 2-thiolation of mcm(5)S(2)U at tRNA wobble positions of tRNA(Lys), tRNA(Glu) and tRNA(Gln). Directly binds tRNAs and probably acts by catalyzing adenylation of tRNAs, an intermediate required for 2-thiolation. It is unclear whether it acts as a sulfurtransferase that transfers sulfur from thiocarboxylated URM1 onto the uridine of tRNAs at wobble position. This Drosophila erecta (Fruit fly) protein is Cytoplasmic tRNA 2-thiolation protein 1.